A 400-amino-acid chain; its full sequence is Enoyl-[acyl-carrier-protein] reductase [NADH] (400 aa).

NAD(+) contacts are provided by residues 48–53 (GSSSGY), 74–75 (FE), 111–112 (DA), and 139–140 (LA). Residue tyrosine 225 participates in substrate binding. Catalysis depends on tyrosine 235, which acts as the Proton donor. NAD(+) is bound by residues lysine 244 and 273–275 (VVT).

Belongs to the TER reductase family. In terms of assembly, monomer.

It catalyses the reaction a 2,3-saturated acyl-[ACP] + NAD(+) = a (2E)-enoyl-[ACP] + NADH + H(+). It participates in lipid metabolism; fatty acid biosynthesis. Functionally, involved in the final reduction of the elongation cycle of fatty acid synthesis (FAS II). Catalyzes the reduction of a carbon-carbon double bond in an enoyl moiety that is covalently linked to an acyl carrier protein (ACP). The polypeptide is Enoyl-[acyl-carrier-protein] reductase [NADH] (Shewanella pealeana (strain ATCC 700345 / ANG-SQ1)).